The chain runs to 604 residues: Replication protein A 70 kDa DNA-binding subunit B (604 aa).

Positions 170–256 form a DNA-binding region, OB; the sequence is WTIKVRVTNK…QNDYEMTLNE (87 aa). A C4-type zinc finger spans residues 468-488; that stretch reads CKTCNKKVTEAMDSGYWCESC.

Belongs to the replication factor A protein 1 family. In terms of assembly, heterotrimer of RPA1, RPA2 and RPA3 (canonical replication protein A complex).

It is found in the nucleus. Its function is as follows. Component of the replication protein A complex (RPA) required for DNA recombination, repair and replication. The activity of RPA is mediated by single-stranded DNA binding and protein interactions. Probably involved in repair of double-strand DNA breaks (DSBs) induced by genotoxic stresses. The sequence is that of Replication protein A 70 kDa DNA-binding subunit B (RPA1B) from Arabidopsis thaliana (Mouse-ear cress).